The sequence spans 89 residues: Large ribosomal subunit protein bL27 (89 aa).

Residues 1–21 (MAHKKAGGSSRNGRDSAGRRL) form a disordered region.

The protein belongs to the bacterial ribosomal protein bL27 family.

In Erythrobacter litoralis (strain HTCC2594), this protein is Large ribosomal subunit protein bL27.